Consider the following 189-residue polypeptide: MKLIIGLGNPGKEYSGNRHNVGFQCLSRFAKENHISFDKKCCLSRTGSGRINDEEIVLAKPQTYMNLSGKAVNQLLRRYNLKATDIIVVQDDLDLPAGKLRLRLGGSAGGHNGVSSIITDIGTKEFIRLKIGIGKPDARNNGAEVVDHVLGNFGGEEREIIETAIARAAEALACLITSGLDTASNRFNC.

Y14 is a tRNA binding site. H19 acts as the Proton acceptor in catalysis. Residues Y64, N66, and N112 each coordinate tRNA.

This sequence belongs to the PTH family. As to quaternary structure, monomer.

It is found in the cytoplasm. The enzyme catalyses an N-acyl-L-alpha-aminoacyl-tRNA + H2O = an N-acyl-L-amino acid + a tRNA + H(+). Hydrolyzes ribosome-free peptidyl-tRNAs (with 1 or more amino acids incorporated), which drop off the ribosome during protein synthesis, or as a result of ribosome stalling. Its function is as follows. Catalyzes the release of premature peptidyl moieties from peptidyl-tRNA molecules trapped in stalled 50S ribosomal subunits, and thus maintains levels of free tRNAs and 50S ribosomes. This is Peptidyl-tRNA hydrolase from Dehalococcoides mccartyi (strain CBDB1).